The chain runs to 258 residues: Probable F-box protein At2g29610 (258 aa).

Residues 1–25 (MVELSEIPGDPNGADPNNNPQEEDE) are disordered. A compositionally biased stretch (low complexity) spans 8 to 20 (PGDPNGADPNNNP). Residues 28 to 74 (LPILLQLPEELIERIIAHFPQCYSPSPILVCETFRQVINSDHFYYVT) enclose the F-box domain.

In Arabidopsis thaliana (Mouse-ear cress), this protein is Probable F-box protein At2g29610.